We begin with the raw amino-acid sequence, 132 residues long: Small ribosomal subunit protein uS8 (132 aa).

It belongs to the universal ribosomal protein uS8 family. As to quaternary structure, part of the 30S ribosomal subunit. Contacts proteins S5 and S12.

Functionally, one of the primary rRNA binding proteins, it binds directly to 16S rRNA central domain where it helps coordinate assembly of the platform of the 30S subunit. This Thermoanaerobacter pseudethanolicus (strain ATCC 33223 / 39E) (Clostridium thermohydrosulfuricum) protein is Small ribosomal subunit protein uS8.